The chain runs to 120 residues: Large ribosomal subunit protein uL18 (120 aa).

A compositionally biased stretch (basic and acidic residues) spans 1–10; that stretch reads MKRTRTESVQ. Positions 1–24 are disordered; that stretch reads MKRTRTESVQRRHSRIRRKVEGTP.

The protein belongs to the universal ribosomal protein uL18 family. In terms of assembly, part of the 50S ribosomal subunit; part of the 5S rRNA/L5/L18/L25 subcomplex. Contacts the 5S and 23S rRNAs.

This is one of the proteins that bind and probably mediate the attachment of the 5S RNA into the large ribosomal subunit, where it forms part of the central protuberance. The protein is Large ribosomal subunit protein uL18 of Gloeothece citriformis (strain PCC 7424) (Cyanothece sp. (strain PCC 7424)).